A 318-amino-acid polypeptide reads, in one-letter code: UDP-3-O-acylglucosamine N-acyltransferase 1 (318 aa).

The active-site Proton acceptor is H230.

The protein belongs to the transferase hexapeptide repeat family. LpxD subfamily. As to quaternary structure, homotrimer.

The catalysed reaction is a UDP-3-O-[(3R)-3-hydroxyacyl]-alpha-D-glucosamine + a (3R)-hydroxyacyl-[ACP] = a UDP-2-N,3-O-bis[(3R)-3-hydroxyacyl]-alpha-D-glucosamine + holo-[ACP] + H(+). The protein operates within bacterial outer membrane biogenesis; LPS lipid A biosynthesis. Functionally, catalyzes the N-acylation of UDP-3-O-acylglucosamine using 3-hydroxyacyl-ACP as the acyl donor. Is involved in the biosynthesis of lipid A, a phosphorylated glycolipid that anchors the lipopolysaccharide to the outer membrane of the cell. This Sulfurimonas denitrificans (strain ATCC 33889 / DSM 1251) (Thiomicrospira denitrificans (strain ATCC 33889 / DSM 1251)) protein is UDP-3-O-acylglucosamine N-acyltransferase 1.